The following is a 106-amino-acid chain: Glutaredoxin-1 (106 aa).

Residue alanine 1 is modified to N-acetylalanine. Residues 2–105 (QEFVNSKIQP…ARLKEMGALR (104 aa)) form the Glutaredoxin domain. The residue at position 8 (lysine 8) is an N6-succinyllysine. 2 disulfides stabilise this stretch: cysteine 22–cysteine 25 and cysteine 78–cysteine 82.

It belongs to the glutaredoxin family.

Its subcellular location is the cytoplasm. Functionally, has a glutathione-disulfide oxidoreductase activity in the presence of NADPH and glutathione reductase. Reduces low molecular weight disulfides and proteins. This Oryctolagus cuniculus (Rabbit) protein is Glutaredoxin-1 (GLRX).